Here is a 348-residue protein sequence, read N- to C-terminus: Fructose-1,6-bisphosphatase class 1 (348 aa).

Mg(2+)-binding residues include glutamate 107, aspartate 129, isoleucine 131, and aspartate 132. Residues 132-135 (DGSS), asparagine 224, tyrosine 252, and lysine 282 contribute to the substrate site. Residue glutamate 288 participates in Mg(2+) binding.

The protein belongs to the FBPase class 1 family. Homotetramer. It depends on Mg(2+) as a cofactor.

The protein resides in the cytoplasm. It catalyses the reaction beta-D-fructose 1,6-bisphosphate + H2O = beta-D-fructose 6-phosphate + phosphate. Its pathway is carbohydrate biosynthesis; Calvin cycle. This chain is Fructose-1,6-bisphosphatase class 1, found in Microcystis aeruginosa (strain NIES-843 / IAM M-2473).